A 152-amino-acid chain; its full sequence is Ribonuclease H (152 aa).

The RNase H type-1 domain maps to 6 to 147 (KKNNVIAYTD…ADELANKAIA (142 aa)). Asp-15, Glu-53, Asp-75, and Asp-139 together coordinate Mg(2+).

It belongs to the RNase H family. Monomer. Mg(2+) serves as cofactor.

It is found in the cytoplasm. The catalysed reaction is Endonucleolytic cleavage to 5'-phosphomonoester.. In terms of biological role, endonuclease that specifically degrades the RNA of RNA-DNA hybrids. The sequence is that of Ribonuclease H from Francisella philomiragia subsp. philomiragia (strain ATCC 25017 / CCUG 19701 / FSC 153 / O#319-036).